Consider the following 247-residue polypeptide: Triosephosphate isomerase (247 aa).

Positions 10 and 12 each coordinate substrate. His94 acts as the Electrophile in catalysis. Glu164 serves as the catalytic Proton acceptor.

The protein belongs to the triosephosphate isomerase family. Homodimer.

It carries out the reaction D-glyceraldehyde 3-phosphate = dihydroxyacetone phosphate. The protein operates within carbohydrate biosynthesis; gluconeogenesis. It functions in the pathway carbohydrate degradation; glycolysis; D-glyceraldehyde 3-phosphate from glycerone phosphate: step 1/1. The protein is Triosephosphate isomerase (Tpi) of Culex tarsalis (Encephalitis mosquito).